Consider the following 238-residue polypeptide: Chromosome partition protein MukE (238 aa).

The interval 206–238 is disordered; that stretch reads EESSQSSFDLDENEKLSDISAEEQHELELEGDA. Positions 218 to 238 are enriched in basic and acidic residues; the sequence is NEKLSDISAEEQHELELEGDA.

The protein belongs to the MukE family. In terms of assembly, interacts, and probably forms a ternary complex, with MukF and MukB. The complex formation is stimulated by calcium or magnesium.

The protein resides in the cytoplasm. It is found in the nucleoid. Its function is as follows. Involved in chromosome condensation, segregation and cell cycle progression. May participate in facilitating chromosome segregation by condensation DNA from both sides of a centrally located replisome during cell division. Probably acts via its interaction with MukB and MukF. The polypeptide is Chromosome partition protein MukE (Aliivibrio salmonicida (strain LFI1238) (Vibrio salmonicida (strain LFI1238))).